The sequence spans 160 residues: Cytochrome b6-f complex subunit 4 (160 aa).

3 helical membrane-spanning segments follow: residues 36 to 56, 95 to 115, and 131 to 151; these read LLYI…GLSV, LLGV…PFIE, and TLFL…TLPI.

This sequence belongs to the cytochrome b family. PetD subfamily. The 4 large subunits of the cytochrome b6-f complex are cytochrome b6, subunit IV (17 kDa polypeptide, petD), cytochrome f and the Rieske protein, while the 4 small subunits are petG, petL, petM and petN. The complex functions as a dimer.

The protein resides in the plastid. It localises to the chloroplast thylakoid membrane. Functionally, component of the cytochrome b6-f complex, which mediates electron transfer between photosystem II (PSII) and photosystem I (PSI), cyclic electron flow around PSI, and state transitions. This Tetradesmus obliquus (Green alga) protein is Cytochrome b6-f complex subunit 4.